A 192-amino-acid chain; its full sequence is GTP cyclohydrolase 1 (192 aa).

Cys82, His85, and Cys153 together coordinate Zn(2+).

Belongs to the GTP cyclohydrolase I family. As to quaternary structure, toroid-shaped homodecamer, composed of two pentamers of five dimers.

The catalysed reaction is GTP + H2O = 7,8-dihydroneopterin 3'-triphosphate + formate + H(+). Its pathway is cofactor biosynthesis; 7,8-dihydroneopterin triphosphate biosynthesis; 7,8-dihydroneopterin triphosphate from GTP: step 1/1. The protein is GTP cyclohydrolase 1 of Rickettsia bellii (strain OSU 85-389).